A 284-amino-acid chain; its full sequence is Isopentenyl-diphosphate delta-isomerase (284 aa).

Lys-77 serves as a coordination point for substrate. His-81 and His-92 together coordinate Mg(2+). In terms of domain architecture, Nudix hydrolase spans 90–256; sequence LLHRAFSVFL…SLVFTPWFKL (167 aa). The substrate site is built by Arg-111 and Lys-115. Cys-127 is an active-site residue. Position 128 (Ser-128) interacts with substrate. A Nudix box motif is present at residues 128–172; the sequence is SHPLCVPSELGVDSSLEGSKDVNNLTNAVKGAKVAAQRKLEHELG. The Mg(2+) site is built by Glu-204 and Glu-206. The active site involves Glu-206.

This sequence belongs to the IPP isomerase type 1 family. The cofactor is Mg(2+).

Its subcellular location is the cytoplasm. The catalysed reaction is isopentenyl diphosphate = dimethylallyl diphosphate. It participates in isoprenoid biosynthesis; dimethylallyl diphosphate biosynthesis; dimethylallyl diphosphate from isopentenyl diphosphate: step 1/1. Isopentenyl-diphosphate delta-isomerase; part of the second module of ergosterol biosynthesis pathway that includes the middle steps of the pathway. IDI1 catalyzes the 1,3-allylic rearrangement of isopentenyl (IPP) to its highly electrophilic allylic isomer, dimethylallyl diphosphate (DMAPP). The second module is carried out in the vacuole and involves the formation of farnesyl diphosphate, which is also an important intermediate in the biosynthesis of ubiquinone, dolichol, heme and prenylated proteins. Activity by the mevalonate kinase ERG12 first converts mevalonate into 5-phosphomevalonate. 5-phosphomevalonate is then further converted to 5-diphosphomevalonate by the phosphomevalonate kinase ERG8. The diphosphomevalonate decarboxylase MVD then produces isopentenyl diphosphate. The isopentenyl-diphosphate delta-isomerase IDI1 then catalyzes the 1,3-allylic rearrangement of the homoallylic substrate isopentenyl (IPP) to its highly electrophilic allylic isomer, dimethylallyl diphosphate (DMAPP). Finally the farnesyl diphosphate synthase ERG20 catalyzes the sequential condensation of isopentenyl pyrophosphate with dimethylallyl pyrophosphate, and then with the resultant geranylpyrophosphate to the ultimate product farnesyl pyrophosphate. The protein is Isopentenyl-diphosphate delta-isomerase of Candida albicans (strain SC5314 / ATCC MYA-2876) (Yeast).